The primary structure comprises 419 residues: MDIQETINQMGKKAAAAARAMRAASPSAKTSALLSLAQLIRQENKAITEANARDLAAAADRGLDAPRMDRLRLTDAVIEEMARACEFVAGLPDPIGATEKQWQRPNGLLVGKMRIPLGVISMIYESRPNVTVDSGILCLKAGNAVILRGGSEAFHSNMMLASLIHRALILAGLPQDAVQVVPSTDRGAIKALCELEEYIDVIIPRGGETLIRTVVADARMPVLKHYKGVCHAYVDEGADLEQACEIIFNAKVQRPGVCNALEGLLVHRSEAHTLLPAVAQKLGDAGVSFRACPRALPLLAPHGVPMAETDPGTEFHDLVMVVKVVDSQDEAQDYIAQHGSNHTEIICTRNHQNAMRFVREVDASMVAVNASSRFNDGGQLGLGAEIGISTSKLHSYGPMGVEELTTTKFVVLGNGQIRQ.

It belongs to the gamma-glutamyl phosphate reductase family.

It is found in the cytoplasm. It carries out the reaction L-glutamate 5-semialdehyde + phosphate + NADP(+) = L-glutamyl 5-phosphate + NADPH + H(+). It functions in the pathway amino-acid biosynthesis; L-proline biosynthesis; L-glutamate 5-semialdehyde from L-glutamate: step 2/2. In terms of biological role, catalyzes the NADPH-dependent reduction of L-glutamate 5-phosphate into L-glutamate 5-semialdehyde and phosphate. The product spontaneously undergoes cyclization to form 1-pyrroline-5-carboxylate. In Oleidesulfovibrio alaskensis (strain ATCC BAA-1058 / DSM 17464 / G20) (Desulfovibrio alaskensis), this protein is Gamma-glutamyl phosphate reductase.